Here is a 445-residue protein sequence, read N- to C-terminus: Methionine aminopeptidase 2 (445 aa).

Residues 1 to 76 (MAAQVASGVG…KKKCTSKVQT (76 aa)) form a disordered region. Over residues 57–71 (AKKKKKKTKKKKKCT) the composition is skewed to basic residues. Substrate is bound at residue His195. A divalent metal cation-binding residues include Asp215, Asp226, and His295. His303 is a substrate binding site. 2 residues coordinate a divalent metal cation: Glu331 and Glu426.

The protein belongs to the peptidase M24A family. Methionine aminopeptidase eukaryotic type 2 subfamily. Requires Co(2+) as cofactor. Zn(2+) is required as a cofactor. The cofactor is Mn(2+). Fe(2+) serves as cofactor.

The protein localises to the cytoplasm. The catalysed reaction is Release of N-terminal amino acids, preferentially methionine, from peptides and arylamides.. Cotranslationally removes the N-terminal methionine from nascent proteins. The N-terminal methionine is often cleaved when the second residue in the primary sequence is small and uncharged (Met-Ala-, Cys, Gly, Pro, Ser, Thr, or Val). The polypeptide is Methionine aminopeptidase 2 (Paracoccidioides lutzii (strain ATCC MYA-826 / Pb01) (Paracoccidioides brasiliensis)).